We begin with the raw amino-acid sequence, 681 residues long: Potassium-transporting ATPase ATP-binding subunit (681 aa).

The next 4 membrane-spanning stretches (helical) occupy residues 30 to 50, 59 to 79, 216 to 236, and 255 to 275; these read LLVY…FFGI, LAIA…EAIA, ILLV…LPFT, and IALL…SIGI. Aspartate 306 serves as the catalytic 4-aspartylphosphate intermediate. ATP contacts are provided by residues aspartate 343, glutamate 347, 376-383, and lysine 394; that span reads FTATTRMS. Mg(2+) is bound by residues aspartate 517 and aspartate 521. The next 3 membrane-spanning stretches (helical) occupy residues 587–607, 615–635, and 661–681; these read FAII…LNLM, AILS…PLSL, and LVAP…LGIV.

This sequence belongs to the cation transport ATPase (P-type) (TC 3.A.3) family. Type IA subfamily. As to quaternary structure, the system is composed of three essential subunits: KdpA, KdpB and KdpC.

It is found in the cell membrane. The enzyme catalyses K(+)(out) + ATP + H2O = K(+)(in) + ADP + phosphate + H(+). In terms of biological role, part of the high-affinity ATP-driven potassium transport (or Kdp) system, which catalyzes the hydrolysis of ATP coupled with the electrogenic transport of potassium into the cytoplasm. This subunit is responsible for energy coupling to the transport system and for the release of the potassium ions to the cytoplasm. The sequence is that of Potassium-transporting ATPase ATP-binding subunit from Listeria welshimeri serovar 6b (strain ATCC 35897 / DSM 20650 / CCUG 15529 / CIP 8149 / NCTC 11857 / SLCC 5334 / V8).